Here is a 53-residue protein sequence, read N- to C-terminus: UPF0391 membrane protein Bxeno_A2958 (53 aa).

The next 2 membrane-spanning stretches (helical) occupy residues 5 to 25 (AIVFFVIAIIAAVFGFTGIAA) and 30 to 50 (IAKILFYIFLVVFVVTLLLGV).

This sequence belongs to the UPF0391 family.

Its subcellular location is the cell membrane. This Paraburkholderia xenovorans (strain LB400) protein is UPF0391 membrane protein Bxeno_A2958.